The following is a 152-amino-acid chain: Transmembrane protein 35B (152 aa).

An N-terminal signal peptide occupies residues 1–21 (MLVSLGALRVLLGIFFTLTGA). Transmembrane regions (helical) follow at residues 62–82 (AAVGWLELLAGLLLVVGPPVL), 85–105 (ISNVLLILLMMGAVFTLVVLE), and 111–131 (YIPAVVCLGLLLLLDSCQFLV).

Belongs to the DoxX family.

The protein localises to the membrane. The protein is Transmembrane protein 35B of Rattus norvegicus (Rat).